Reading from the N-terminus, the 188-residue chain is MSIKSDKWIRRMAQEHGMIEPFVERQVRGADSSRVISYGVSSYGYDVRCADEFKVFTNIHSAIVDPKNFDEKSFVDIKSDVCIIPPNSFALARTVEYFRIPRDVLTICLGKSTYARCGIIVNVTPLEPEWEGHVTLEFSNTTNLPAKIYANEGVAQMLFLQSDEACEVSYKDRGGKYQGQTGVTLPRT.

DCTP contacts are provided by residues 111–116, 135–137, glutamine 156, tyrosine 170, and glutamine 180; these read KSTYAR and TLE. The active-site Proton donor/acceptor is the glutamate 137.

The protein belongs to the dCTP deaminase family. As to quaternary structure, homotrimer.

It carries out the reaction dCTP + H2O + H(+) = dUTP + NH4(+). It functions in the pathway pyrimidine metabolism; dUMP biosynthesis; dUMP from dCTP (dUTP route): step 1/2. Functionally, catalyzes the deamination of dCTP to dUTP. The polypeptide is dCTP deaminase (Ectopseudomonas mendocina (strain ymp) (Pseudomonas mendocina)).